A 289-amino-acid polypeptide reads, in one-letter code: Phosphatidylglycerol--prolipoprotein diacylglyceryl transferase (289 aa).

The next 3 membrane-spanning stretches (helical) occupy residues 24 to 44 (GIAI…VYLL), 70 to 90 (GGVL…DWFL), and 111 to 131 (GING…LWLF). Residue R158 participates in a 1,2-diacyl-sn-glycero-3-phospho-(1'-sn-glycerol) binding. Helical transmembrane passes span 219-239 (GYLS…IEFF) and 253-273 (FSMG…ILVW).

The protein belongs to the Lgt family.

Its subcellular location is the cell inner membrane. It catalyses the reaction L-cysteinyl-[prolipoprotein] + a 1,2-diacyl-sn-glycero-3-phospho-(1'-sn-glycerol) = an S-1,2-diacyl-sn-glyceryl-L-cysteinyl-[prolipoprotein] + sn-glycerol 1-phosphate + H(+). It participates in protein modification; lipoprotein biosynthesis (diacylglyceryl transfer). Its function is as follows. Catalyzes the transfer of the diacylglyceryl group from phosphatidylglycerol to the sulfhydryl group of the N-terminal cysteine of a prolipoprotein, the first step in the formation of mature lipoproteins. This chain is Phosphatidylglycerol--prolipoprotein diacylglyceryl transferase, found in Chlorobaculum tepidum (strain ATCC 49652 / DSM 12025 / NBRC 103806 / TLS) (Chlorobium tepidum).